Consider the following 87-residue polypeptide: Small ribosomal subunit protein bS20 (87 aa).

The segment at 67 to 87 (HKNNGSRKASRLDAYVQSKQQ) is disordered.

It belongs to the bacterial ribosomal protein bS20 family.

Binds directly to 16S ribosomal RNA. This chain is Small ribosomal subunit protein bS20, found in Metamycoplasma arthritidis (strain 158L3-1) (Mycoplasma arthritidis).